Here is a 309-residue protein sequence, read N- to C-terminus: Foldase protein PrsA (309 aa).

Residues 1–22 (MKTRSKLAAGFLTLMSVATLAA) form the signal peptide. The N-palmitoyl cysteine moiety is linked to residue C23. C23 carries S-diacylglycerol cysteine lipidation. The PpiC domain occupies 146-241 (TPETSVQVIK…TSYYIIKVTD (96 aa)).

It belongs to the PrsA family.

It is found in the cell membrane. The enzyme catalyses [protein]-peptidylproline (omega=180) = [protein]-peptidylproline (omega=0). Its function is as follows. Plays a major role in protein secretion by helping the post-translocational extracellular folding of several secreted proteins. This is Foldase protein PrsA from Streptococcus agalactiae serotype III (strain NEM316).